Here is a 137-residue protein sequence, read N- to C-terminus: MKSLGRHIIAEFYDCDKEMLDNIDAIEFHMKQAAYETGATIVNSSFHRFLPYGVSGVVVISESHLTIHTWPEYGYAAVDLFTCGDHVDPWKAFSYLKKIFKSQRAHVVEHLRGKYDEVGIPENAPHKAVEAEMAEIF.

Ser63 acts as the Schiff-base intermediate with substrate; via pyruvic acid in catalysis. Ser63 bears the Pyruvic acid (Ser); by autocatalysis mark. Catalysis depends on His68, which acts as the Proton acceptor; for processing activity. Cys83 (proton donor; for catalytic activity) is an active-site residue.

It belongs to the prokaryotic AdoMetDC family. Type 1 subfamily. In terms of assembly, heterotetramer of two alpha and two beta chains arranged as a dimer of alpha/beta heterodimers. The cofactor is pyruvate. Is synthesized initially as an inactive proenzyme. Formation of the active enzyme involves a self-maturation process in which the active site pyruvoyl group is generated from an internal serine residue via an autocatalytic post-translational modification. Two non-identical subunits are generated from the proenzyme in this reaction, and the pyruvate is formed at the N-terminus of the alpha chain, which is derived from the carboxyl end of the proenzyme. The post-translation cleavage follows an unusual pathway, termed non-hydrolytic serinolysis, in which the side chain hydroxyl group of the serine supplies its oxygen atom to form the C-terminus of the beta chain, while the remainder of the serine residue undergoes an oxidative deamination to produce ammonia and the pyruvoyl group blocking the N-terminus of the alpha chain.

The catalysed reaction is S-adenosyl-L-methionine + H(+) = S-adenosyl 3-(methylsulfanyl)propylamine + CO2. It participates in amine and polyamine biosynthesis; S-adenosylmethioninamine biosynthesis; S-adenosylmethioninamine from S-adenosyl-L-methionine: step 1/1. Functionally, catalyzes the decarboxylation of S-adenosylmethionine to S-adenosylmethioninamine (dcAdoMet), the propylamine donor required for the synthesis of the polyamines spermine and spermidine from the diamine putrescine. This Fervidobacterium nodosum (strain ATCC 35602 / DSM 5306 / Rt17-B1) protein is S-adenosylmethionine decarboxylase proenzyme.